The sequence spans 397 residues: Autophagy-related protein 29 (397 aa).

The segment at 71 to 397 (ATAAVRNSGP…RSRYTSSSNQ (327 aa)) is disordered. Over residues 230–240 (QYEDDDDDESE) the composition is skewed to acidic residues. Over residues 245-259 (PYTSPSSKTSAQDLG) the composition is skewed to polar residues. Residues 269–282 (SGKRPHKSHGKPAI) are compositionally biased toward basic residues. Composition is skewed to basic and acidic residues over residues 300-309 (KPDKTDRSTE) and 330-341 (GGKDKGYSREGS). Polar residues-rich tracts occupy residues 343-363 (GTPSMGSSYSDLDDASVTQSA) and 381-397 (FSISQAFRSRYTSSSNQ).

Belongs to the ATG29 family. Forms a stable complex with ATG17 and ATG31. Interacts directly with ATG31. The ATG17-ATG29-ATG31 complex interacts with the ATG1-ATG13 complex. Note=The interaction with the ATG1-ATG13 complex is induced by starvation.

Its subcellular location is the preautophagosomal structure. In terms of biological role, plays a role in autophagy. Functions at the preautophagosomal structure (PAS) in order to form normal autophagosomes under starvation conditions. Also plays a role in mitophagy. Autophagy is required for proper vegetative growth, asexual/sexual reproduction, and full virulence. Autophagy is particularly involved in the biosynthesis of deoxynivalenol (DON), an important virulence determinant. The polypeptide is Autophagy-related protein 29 (Gibberella zeae (strain ATCC MYA-4620 / CBS 123657 / FGSC 9075 / NRRL 31084 / PH-1) (Wheat head blight fungus)).